A 226-amino-acid chain; its full sequence is 7-cyano-7-deazaguanine synthase (226 aa).

Leucine 9–leucine 19 contributes to the ATP binding site. Zn(2+) is bound by residues cysteine 189, cysteine 199, cysteine 202, and cysteine 205.

Belongs to the QueC family. It depends on Zn(2+) as a cofactor.

The enzyme catalyses 7-carboxy-7-deazaguanine + NH4(+) + ATP = 7-cyano-7-deazaguanine + ADP + phosphate + H2O + H(+). It functions in the pathway purine metabolism; 7-cyano-7-deazaguanine biosynthesis. Its function is as follows. Catalyzes the ATP-dependent conversion of 7-carboxy-7-deazaguanine (CDG) to 7-cyano-7-deazaguanine (preQ(0)). This chain is 7-cyano-7-deazaguanine synthase, found in Cupriavidus pinatubonensis (strain JMP 134 / LMG 1197) (Cupriavidus necator (strain JMP 134)).